We begin with the raw amino-acid sequence, 162 residues long: Interleukin-15 (162 aa).

Residues 1 to 29 (MRISKPHLRSISIQCYLCLLLNSHFLTEA) form the signal peptide. The propeptide occupies 30 to 48 (GIHVFILGCFSAGLPKTEA). Disulfide bonds link cysteine 83–cysteine 133 and cysteine 90–cysteine 136. An N-linked (GlcNAc...) asparagine glycan is attached at asparagine 127.

The protein belongs to the IL-15/IL-21 family. As to expression, most abundant in placenta and skeletal muscle. It is also detected in the heart, lung, liver and kidney. IL15-S21AA is preferentially expressed in tissues such as testis and thymus.

It is found in the secreted. The protein localises to the cytoplasm. It localises to the nucleus. Its function is as follows. Cytokine that plays a major role in the development of inflammatory and protective immune responses to microbial invaders and parasites by modulating immune cells of both the innate and adaptive immune systems. Stimulates the proliferation of natural killer cells, T-cells and B-cells and promotes the secretion of several cytokines. In monocytes, induces the production of IL8 and monocyte chemotactic protein 1/CCL2, two chemokines that attract neutrophils and monocytes respectively to sites of infection. Unlike most cytokines, which are secreted in soluble form, IL15 is expressed in association with its high affinity IL15RA on the surface of IL15-producing cells and delivers signals to target cells that express IL2RB and IL2RG receptor subunits. Binding to its receptor triggers the phosphorylation of JAK1 and JAK3 and the recruitment and subsequent phosphorylation of signal transducer and activator of transcription-3/STAT3 and STAT5. In mast cells, induces the rapid tyrosine phosphorylation of STAT6 and thereby controls mast cell survival and release of cytokines such as IL4. This is Interleukin-15 (IL15) from Homo sapiens (Human).